The sequence spans 390 residues: DNA polymerase IV (390 aa).

The region spanning 6–187 (VMHVDLDAFF…LDISIMPGIG (182 aa)) is the UmuC domain. Mg(2+)-binding residues include Asp-10 and Asp-105. Residue Glu-106 is part of the active site.

Belongs to the DNA polymerase type-Y family. In terms of assembly, monomer. Mg(2+) is required as a cofactor.

The protein localises to the cytoplasm. It catalyses the reaction DNA(n) + a 2'-deoxyribonucleoside 5'-triphosphate = DNA(n+1) + diphosphate. Poorly processive, error-prone DNA polymerase involved in untargeted mutagenesis. Copies undamaged DNA at stalled replication forks, which arise in vivo from mismatched or misaligned primer ends. These misaligned primers can be extended by PolIV. Exhibits no 3'-5' exonuclease (proofreading) activity. May be involved in translesional synthesis, in conjunction with the beta clamp from PolIII. In Dehalococcoides mccartyi (strain ATCC BAA-2266 / KCTC 15142 / 195) (Dehalococcoides ethenogenes (strain 195)), this protein is DNA polymerase IV.